Reading from the N-terminus, the 193-residue chain is ATP-dependent Clp protease proteolytic subunit (193 aa).

Ser-98 functions as the Nucleophile in the catalytic mechanism. His-123 is a catalytic residue.

It belongs to the peptidase S14 family. In terms of assembly, fourteen ClpP subunits assemble into 2 heptameric rings which stack back to back to give a disk-like structure with a central cavity, resembling the structure of eukaryotic proteasomes.

The protein resides in the cytoplasm. It carries out the reaction Hydrolysis of proteins to small peptides in the presence of ATP and magnesium. alpha-casein is the usual test substrate. In the absence of ATP, only oligopeptides shorter than five residues are hydrolyzed (such as succinyl-Leu-Tyr-|-NHMec, and Leu-Tyr-Leu-|-Tyr-Trp, in which cleavage of the -Tyr-|-Leu- and -Tyr-|-Trp bonds also occurs).. In terms of biological role, cleaves peptides in various proteins in a process that requires ATP hydrolysis. Has a chymotrypsin-like activity. Plays a major role in the degradation of misfolded proteins. The protein is ATP-dependent Clp protease proteolytic subunit of Histophilus somni (strain 2336) (Haemophilus somnus).